Here is a 918-residue protein sequence, read N- to C-terminus: E3 ubiquitin-protein ligase CBL-B-A (918 aa).

A compositionally biased stretch (low complexity) spans 1 to 18; that stretch reads MASGSGSSSSTSSSALSG. Residues 1–27 are disordered; it reads MASGSGSSSSTSSSALSGRLPGSRSAN. Residues 46 to 178 form a 4H region; that stretch reads PPKQAAADRR…KAIFPSGQFQ (133 aa). Residues 46 to 354 enclose the Cbl-PTB domain; the sequence is PPKQAAADRR…GRSYNPDLTG (309 aa). The tract at residues 179–251 is EF-hand-like; that stretch reads GDNFRITKAD…FEFDIFTRLF (73 aa). D232, T234, N236, Y238, and E243 together coordinate Ca(2+). Residues 252 to 354 form an SH2-like region; sequence QPWGSILRNW…GRSYNPDLTG (103 aa). 4-O-phospho-L-tyrosine is bound at residue R297. The interval 355–383 is linker; it reads LCEPTPHDHIKVTQEQYELYCEMGSTFQL. The segment at 384–423 adopts an RING-type zinc-finger fold; it reads CKICAENDKDVKIEPCGHLMCTSCLTSWQESDGQGCPFCR. Disordered stretches follow at residues 481–582, 780–831, and 857–918; these read NERQ…RTCR, FPPA…PPAR, and HSDP…MRPT. The segment covering 483 to 497 has biased composition (polar residues); that stretch reads RQNSPVTSPGSSPLS. Composition is skewed to pro residues over residues 554 to 576 and 821 to 830; these read LPAPPPLLREPPPPPERPPPIPP and PSQPPPPPPA. A compositionally biased stretch (polar residues) spans 898 to 918; it reads KASNTKGELLLPNQNLIMRPT.

Interacts with several SH3 domain-containing proteins and with poly-ubiquitinated proteins.

Its subcellular location is the cytoplasm. It catalyses the reaction S-ubiquitinyl-[E2 ubiquitin-conjugating enzyme]-L-cysteine + [acceptor protein]-L-lysine = [E2 ubiquitin-conjugating enzyme]-L-cysteine + N(6)-ubiquitinyl-[acceptor protein]-L-lysine.. It functions in the pathway protein modification; protein ubiquitination. In terms of biological role, E3 ubiquitin-protein ligase which accepts ubiquitin from specific E2 ubiquitin-conjugating enzymes, and transfers it to substrates, generally promoting their degradation by the proteasome. This chain is E3 ubiquitin-protein ligase CBL-B-A (cblb-a), found in Xenopus laevis (African clawed frog).